Reading from the N-terminus, the 304-residue chain is Developmental pluripotency-associated protein 4 (304 aa).

Residues Met-1 to Met-11 show a composition bias toward polar residues. 2 disordered regions span residues Met-1 to Leu-84 and Lys-147 to Pro-176. Positions Glu-12–Asp-29 are enriched in basic and acidic residues. Phosphothreonine is present on Thr-215. Phosphoserine occurs at positions 221 and 226.

As to quaternary structure, interacts with DPPA2. Interacts with PCGF1.

The protein localises to the nucleus. In terms of biological role, may be involved in the maintenance of active epigenetic status of target genes. May inhibit differentiation of embryonic cells into a primitive ectoderm lineage. The chain is Developmental pluripotency-associated protein 4 (DPPA4) from Homo sapiens (Human).